A 513-amino-acid polypeptide reads, in one-letter code: MQLNSTEISELIKQRIAQFNVVSEAHNEGTIVSVSDGVIRIHGLAECMQGEMISLPGNRYAIALNLERDSVGAVVMGPYADLAEGMKVKCTGRILEVPVGRGLLGRVVNTLGAPIDGKGPLENDGFSAVEAIAPGVIERQSVDQPVQTGYKSVDAMIPIGRGQRELIIGDRQTGKTALAIDAIINQRDSGIKCVYVAIGQKASTISNVVRKLEEHGALANTIVVVATASESAALQYLAPYAGCAMGEYFRDRGEDALIVYDDLSKQAVAYRQISLLLRRPPGREAFPGDVFYLHSRLLERAARVNAEYVEAFTKGEVKGKTGSLTALPIIETQAGDVSAFVPTNVISITDGQIFLETNLFNAGIRPAVNPGISVSRVGGAAQTKIMKKLSGGIRTALAQYRELAAFSQFASDLDDATRKQLDHGQKVTELLKQKQYAPMSVAQQSLVLFAAERGYLADVELAKIGSFEAALLAYVDRDHAPLMQEINQSGGYNDEIEGKLKGILDSFKATQSW.

169–176 contacts ATP; that stretch reads GDRQTGKT.

Belongs to the ATPase alpha/beta chains family. In terms of assembly, F-type ATPases have 2 components, CF(1) - the catalytic core - and CF(0) - the membrane proton channel. CF(1) has five subunits: alpha(3), beta(3), gamma(1), delta(1), epsilon(1). CF(0) has three main subunits: a(1), b(2) and c(9-12). The alpha and beta chains form an alternating ring which encloses part of the gamma chain. CF(1) is attached to CF(0) by a central stalk formed by the gamma and epsilon chains, while a peripheral stalk is formed by the delta and b chains.

The protein resides in the cell inner membrane. The catalysed reaction is ATP + H2O + 4 H(+)(in) = ADP + phosphate + 5 H(+)(out). In terms of biological role, produces ATP from ADP in the presence of a proton gradient across the membrane. The alpha chain is a regulatory subunit. In Klebsiella pneumoniae subsp. pneumoniae (strain ATCC 700721 / MGH 78578), this protein is ATP synthase subunit alpha.